Consider the following 977-residue polypeptide: Mast/stem cell growth factor receptor Kit (977 aa).

An N-terminal signal peptide occupies residues 1-25; that stretch reads MRGARGAWDFLFVLLLLLLVQTGSS. The Extracellular segment spans residues 26-525; it reads QPSVSPGELS…QIHAHTLFTP (500 aa). 5 Ig-like C2-type domains span residues 27 to 112, 121 to 205, 212 to 309, 318 to 411, and 414 to 508; these read PSVS…VFVR, DLPL…LKVR, PVVS…LEVV, PMMN…VYVN, and PEIL…FNFA. A disulfide bond links Cys58 and Cys97. Residues Asn94, Asn130, and Asn145 are each glycosylated (N-linked (GlcNAc...) asparagine). Disulfide bonds link Cys136–Cys186, Cys151–Cys183, and Cys233–Cys291. Residues Asn284, Asn294, Asn301, Asn321, Asn353, Asn368, Asn401, Asn464, and Asn487 are each glycosylated (N-linked (GlcNAc...) asparagine). A disulfide bridge connects residues Cys429 and Cys492. A helical membrane pass occupies residues 526-546; sequence LLIGFVIAAGLMCIFVMILTY. The Cytoplasmic segment spans residues 547–977; the sequence is KYLQKPMYEV…TQPLLVHEDV (431 aa). A phosphotyrosine mark is found at Tyr548 and Tyr554. Residue Tyr569 coordinates Mg(2+). Phosphotyrosine; by autocatalysis is present on residues Tyr569 and Tyr571. Positions 569 to 571 are important for interaction with phosphotyrosine-binding proteins; the sequence is YVY. The region spanning 590–938 is the Protein kinase domain; the sequence is LSFGKTLGAG…ISESTNHIYS (349 aa). ATP is bound by residues 597 to 604, Lys624, and 672 to 678; these read GAGAFGKV and EYCCYGD. A phosphotyrosine; by autocatalysis mark is found at Tyr704 and Tyr722. Tyr731 is modified (phosphotyrosine). A phosphoserine; by PKC/PRKCA mark is found at Ser742 and Ser747. Residue Asp793 is the Proton acceptor of the active site. Residue Arg797 coordinates ATP. Mg(2+) contacts are provided by Asn798 and Asp811. Ser822 carries the phosphoserine modification. Tyr824 bears the Phosphotyrosine; by autocatalysis mark. Phosphoserine is present on Ser892. Tyr901 is subject to Phosphotyrosine. A Phosphotyrosine; by autocatalysis modification is found at Tyr937. Ser960 bears the Phosphoserine mark.

Belongs to the protein kinase superfamily. Tyr protein kinase family. CSF-1/PDGF receptor subfamily. As to quaternary structure, monomer in the absence of bound KITLG/SCF. Homodimer in the presence of bound KITLG/SCF, forming a heterotetramer with two KITLG/SCF molecules. Interacts (via phosphorylated tyrosine residues) with the adapter proteins GRB2 and GRB7 (via SH2 domain), and SH2B2/APS. Interacts (via C-terminus) with MPDZ (via the tenth PDZ domain). Interacts (via phosphorylated tyrosine residues) with PIK3R1 and PIK3CD. Interacts (via phosphorylated tyrosine) with CRK (isoform Crk-II), FYN, SHC1 and MATK/CHK (via SH2 domain). Interacts with LYN and FES/FPS. Interacts (via phosphorylated tyrosine residues) with the protein phosphatases PTPN6/SHP-1 (via SH2 domain), PTPN11/SHP-2 (via SH2 domain) and PTPRU. Interacts with PLCG1. Interacts with DOK1 and TEC. Interacts with IL1RAP (independent of stimulation with KITLG/SCF). A mast cell-specific KITLG/SCF-induced interleukin-33 signaling complex contains IL1RL1, IL1RAP, KIT and MYD88. In terms of processing, ubiquitinated by SOCS6. KIT is rapidly ubiquitinated after autophosphorylation induced by KITLG/SCF binding, leading to internalization and degradation. Autophosphorylated on tyrosine residues. KITLG/SCF binding promotes autophosphorylation. Phosphorylated tyrosine residues are important for interaction with specific binding partners.

The protein resides in the cell membrane. It catalyses the reaction L-tyrosyl-[protein] + ATP = O-phospho-L-tyrosyl-[protein] + ADP + H(+). With respect to regulation, present in an inactive conformation in the absence of bound ligand. KITLG/SCF binding leads to dimerization and activation by autophosphorylation on tyrosine residues. Activity is down-regulated by PRKCA-mediated phosphorylation on serine residues. Tyrosine-protein kinase that acts as a cell-surface receptor for the cytokine KITLG/SCF and plays an essential role in the regulation of cell survival and proliferation, hematopoiesis, stem cell maintenance, gametogenesis, mast cell development, migration and function, and in melanogenesis. In response to KITLG/SCF binding, KIT can activate several signaling pathways. Phosphorylates PIK3R1, PLCG1, SH2B2/APS and CBL. Activates the AKT1 signaling pathway by phosphorylation of PIK3R1, the regulatory subunit of phosphatidylinositol 3-kinase. Activated KIT also transmits signals via GRB2 and activation of RAS, RAF1 and the MAP kinases MAPK1/ERK2 and/or MAPK3/ERK1. Promotes activation of STAT family members STAT1, STAT3, STAT5A and STAT5B. Activation of PLCG1 leads to the production of the cellular signaling molecules diacylglycerol and inositol 1,4,5-trisphosphate. KIT signaling is modulated by protein phosphatases, and by rapid internalization and degradation of the receptor. Activated KIT promotes phosphorylation of the protein phosphatases PTPN6/SHP-1 and PTPRU, and of the transcription factors STAT1, STAT3, STAT5A and STAT5B. Promotes phosphorylation of PIK3R1, CBL, CRK (isoform Crk-II), LYN, MAPK1/ERK2 and/or MAPK3/ERK1, PLCG1, SRC and SHC1. The chain is Mast/stem cell growth factor receptor Kit (KIT) from Bos taurus (Bovine).